The chain runs to 252 residues: Mediator of RNA polymerase II transcription subunit 4 (252 aa).

Residues 70–112 (KIHQEMQVLEKEVEKRDSDIQQLQKQLKEAEHILATAVYQAKE) adopt a coiled-coil conformation. The disordered stretch occupies residues 218–252 (HSNEFLMESLGPNKENEEDVEVMSTDSSSSSSDSD). A compositionally biased stretch (low complexity) spans 241–252 (STDSSSSSSDSD).

This sequence belongs to the Mediator complex subunit 4 family. Component of the Mediator complex.

It is found in the nucleus. Component of the Mediator complex, a coactivator involved in the regulated transcription of nearly all RNA polymerase II-dependent genes. Mediator functions as a bridge to convey information from gene-specific regulatory proteins to the basal RNA polymerase II transcription machinery. Mediator is recruited to promoters by direct interactions with regulatory proteins and serves as a scaffold for the assembly of a functional preinitiation complex with RNA polymerase II and the general transcription factors. This chain is Mediator of RNA polymerase II transcription subunit 4 (med4), found in Xenopus tropicalis (Western clawed frog).